The following is a 188-amino-acid chain: UPF0340 protein BH3766 (188 aa).

This sequence belongs to the UPF0340 family.

The polypeptide is UPF0340 protein BH3766 (Halalkalibacterium halodurans (strain ATCC BAA-125 / DSM 18197 / FERM 7344 / JCM 9153 / C-125) (Bacillus halodurans)).